A 409-amino-acid polypeptide reads, in one-letter code: Adenosine deaminase (409 aa).

Zn(2+)-binding residues include H65, H67, H207, and D314.

The protein belongs to the metallo-dependent hydrolases superfamily. Zn(2+) is required as a cofactor.

It carries out the reaction adenosine + H2O + H(+) = inosine + NH4(+). Catalyzes the deamination of adenosine into inosine. Is also able to deaminate adenine, but with considerably less efficiency. Is not active toward 6-chloroadenine. In Helicobacter pylori (strain ATCC 700392 / 26695) (Campylobacter pylori), this protein is Adenosine deaminase.